Consider the following 309-residue polypeptide: Glutaminase (309 aa).

The substrate site is built by Ser-64, Asn-114, Glu-160, Asn-167, Tyr-191, Tyr-243, and Val-261.

This sequence belongs to the glutaminase family. In terms of assembly, homotetramer.

It carries out the reaction L-glutamine + H2O = L-glutamate + NH4(+). This is Glutaminase from Rhodopseudomonas palustris (strain BisB18).